The primary structure comprises 731 residues: SUN domain-containing protein 2 (731 aa).

Disordered stretches follow at residues methionine 1 to serine 69 and serine 106 to serine 142. Residues methionine 1–leucine 128 are LMNA-binding. Residues methionine 1–serine 226 are Nuclear-facing. A Phosphoserine modification is found at serine 12. Positions glycine 18–glycine 33 are enriched in low complexity. A phosphoserine mark is found at serine 39 and serine 55. Threonine 117 carries the phosphothreonine modification. Phosphoserine occurs at positions 120, 123, and 147. A helical transmembrane segment spans residues phenylalanine 227–phenylalanine 247. The Perinuclear space segment spans residues tyrosine 248–histidine 731. Coiled-coil stretches lie at residues glutamine 396–glutamate 452 and arginine 486–arginine 519. The segment at alanine 521–histidine 731 is sufficient for interaction with SYNE1 and SYNE2. In terms of domain architecture, SUN spans glycine 569–alanine 730. The N-linked (GlcNAc...) asparagine glycan is linked to asparagine 650.

As to quaternary structure, core component of the LINC complex which is composed of inner nuclear membrane SUN domain-containing proteins coupled to outer nuclear membrane KASH domain-containing nesprins. SUN and KASH domain-containing proteins seem to bind each other promiscuously; however, differentially expression of LINC complex constituents is giving rise to specific assemblies. At least SUN1/2-containing core LINC complexes are proposed to be hexameric composed of three protomers of each KASH and SUN domain-containing protein. Interacts with SYNE2; the SUN2:SYNE2/KASH2 LINC complex is a heterohexamer; the homotrimeric cloverleave-like conformation of the SUN domain is a prerequisite for LINC complex formation in which three separate SYNE2/KASH2 peptides bind at the interface of adjacent SUN domains. Component of a probable SUN2:KASH5 LINC complex. Interacts with SYNE1 and SYNE3; probably forming respective LINC complexes. Interacts with A-type lamin. Interaction with lamins B1 and C is hardly detectable. Interacts with EMD. Interacts with RAB5A. Interacts with TMEM43 and TMEM201. Interacts with IRAG2. In terms of processing, the disulfide bond with SYNE2 is required for stability of the SUN2:SYNE2/KASH2 LINC complex under tensile forces though not required for the interaction. The disulfide bond is proposed to be conserved in LINC complexes involved in force transmission. In terms of tissue distribution, highly expressed in heart, placenta and muscle.

Its subcellular location is the nucleus inner membrane. It localises to the nucleus envelope. The protein resides in the endosome membrane. In terms of biological role, as a component of the LINC (LInker of Nucleoskeleton and Cytoskeleton) complex, involved in the connection between the nuclear lamina and the cytoskeleton. The nucleocytoplasmic interactions established by the LINC complex play an important role in the transmission of mechanical forces across the nuclear envelope and in nuclear movement and positioning. Specifically, SYNE2 and SUN2 assemble in arrays of transmembrane actin-associated nuclear (TAN) lines which are bound to F-actin cables and couple the nucleus to retrograde actin flow during actin-dependent nuclear movement. Required for interkinetic nuclear migration (INM) and essential for nucleokinesis and centrosome-nucleus coupling during radial neuronal migration in the cerebral cortex and during glial migration. Required for nuclear migration in retinal photoreceptor progenitors implicating association with cytoplasmic dynein-dynactin and kinesin motor complexes, and probably B-type lamins; SUN1 and SUN2 seem to act redundantly. The SUN1/2:KASH5 LINC complex couples telomeres to microtubules during meiosis; SUN1 and SUN2 seem to act at least partial redundantly. Anchors chromosome movement in the prophase of meiosis and is involved in selective gene expression of coding and non-coding RNAs needed for gametogenesis. Required for telomere attachment to nuclear envelope and gametogenesis. May also function on endocytic vesicles as a receptor for Rab5-GDP and participate in the activation of Rab5. The protein is SUN domain-containing protein 2 of Mus musculus (Mouse).